A 62-amino-acid polypeptide reads, in one-letter code: MKTSILFVIFSLALVFALSPATEIEETDRACGQFWWKCGEGKPPCCANFACKIGLYLCIWSP.

Positions 1–21 are cleaved as a signal peptide; it reads MKTSILFVIFSLALVFALSPA. Residues 22–29 constitute a propeptide that is removed on maturation; it reads TEIEETDR. 3 disulfide bridges follow: cysteine 31–cysteine 46, cysteine 38–cysteine 51, and cysteine 45–cysteine 58.

It belongs to the neurotoxin 10 (Hwtx-1) family. 33 (Jztx-1) subfamily. As to expression, expressed by the venom gland.

The protein localises to the secreted. Its function is as follows. Moderately inhibits voltage-gated sodium channels and weakly inhibits voltage-gated potassium channel. Inhibits the inactivation of rat Nav1.2/SCN2A (IC(50)=870 nM), rat Nav1.3/SCN3A (IC(50)=845 nM), rat Nav1.4/SCN4A (IC(50)=339 nM), human Nav1.5/SCN5A (IC(50)=335 nM) and human Nav1.7/SCN9A sodium channels (IC(50)=348 nM). The toxin delays the inactivation of sodium channels without affecting the activation and steady-state inactivation kinetics in the physiological range of voltages. Site-directed mutagenesis of the sodium channel indicates that the toxin interacts with site 3 located at the extracellular S3-S4 linker of domain IV. On potassium channels, it inhibits activation of channels with an IC(50) of 8.05 uM through a voltage sensor-trapping mechanism. It increases muscle contraction in several assays (mouse phrenic nerve-diaphragm, toad heart, rat vas deferens) and is suggested to act both presynaptically and postsynaptically. The sequence is that of Delta-theraphotoxin-Cg1a 3 from Chilobrachys guangxiensis (Chinese earth tiger tarantula).